The chain runs to 233 residues: NAD-dependent protein deacylase (233 aa).

One can recognise a Deacetylase sirtuin-type domain in the interval 1–230; sequence MKNIMILSGA…ALDIENFMKD (230 aa). 9-28 contacts NAD(+); that stretch reads GAGLSAPSGLKTFRDNDGLW. 2 residues coordinate substrate: tyrosine 53 and arginine 56. 88–91 provides a ligand contact to NAD(+); the sequence is QNVD. The active-site Proton acceptor is histidine 106. 4 residues coordinate Zn(2+): cysteine 114, cysteine 117, cysteine 133, and cysteine 136. NAD(+)-binding positions include 172–174 and isoleucine 213; that span reads GTS.

Belongs to the sirtuin family. Class III subfamily. It depends on Zn(2+) as a cofactor.

The protein localises to the cytoplasm. It catalyses the reaction N(6)-acetyl-L-lysyl-[protein] + NAD(+) + H2O = 2''-O-acetyl-ADP-D-ribose + nicotinamide + L-lysyl-[protein]. The catalysed reaction is N(6)-succinyl-L-lysyl-[protein] + NAD(+) + H2O = 2''-O-succinyl-ADP-D-ribose + nicotinamide + L-lysyl-[protein]. NAD-dependent lysine deacetylase and desuccinylase that specifically removes acetyl and succinyl groups on target proteins. Modulates the activities of several proteins which are inactive in their acylated form. The chain is NAD-dependent protein deacylase from Campylobacter jejuni (strain RM1221).